A 123-amino-acid chain; its full sequence is Protein Wnt-3a (123 aa).

Ser1 carries O-palmitoleoyl serine lipidation. Cys89 and Cys104 are disulfide-bonded. Asn90 carries N-linked (GlcNAc...) asparagine glycosylation.

Belongs to the Wnt family. Post-translationally, disulfide bonds have critical and distinct roles in secretion and activity. Loss of each conserved cysteine results in high molecular weight oxidized Wnt oligomers, which are formed through inter-Wnt disulfide bonding. In terms of processing, palmitoleoylation is required for efficient binding to frizzled receptors. Depalmitoleoylation leads to Wnt signaling pathway inhibition.

It is found in the secreted. The protein resides in the extracellular space. Its subcellular location is the extracellular matrix. In terms of biological role, ligand for members of the frizzled family of seven transmembrane receptors. Functions in the canonical Wnt signaling pathway that results in activation of transcription factors of the TCF/LEF family. Required for normal embryonic mesoderm development and formation of caudal somites. Required for normal morphogenesis of the developing neural tube. The protein is Protein Wnt-3a (WNT-3A) of Alopias vulpinus (Common thresher shark).